The primary structure comprises 158 residues: MVDKVPMTQGGFVNLQEELRWRQQEERPRIIEAIAEARAHGDLSENAEYHAAKEAQSHNEGRISELEDLIARAEVIDLSKMSGSKIKFGARVKLVDEDTEEEKTYQIVGDQEADVKQGRISISSPIARALIGKEVGDSIEVNAPGGSKAYEILAVQWG.

It belongs to the GreA/GreB family.

In terms of biological role, necessary for efficient RNA polymerase transcription elongation past template-encoded arresting sites. The arresting sites in DNA have the property of trapping a certain fraction of elongating RNA polymerases that pass through, resulting in locked ternary complexes. Cleavage of the nascent transcript by cleavage factors such as GreA or GreB allows the resumption of elongation from the new 3'terminus. GreA releases sequences of 2 to 3 nucleotides. This chain is Transcription elongation factor GreA, found in Sinorhizobium medicae (strain WSM419) (Ensifer medicae).